A 63-amino-acid chain; its full sequence is KKDGYPVDSGNCKYECLKDDYCNDLCLERKADKGYCYWGKVSCYCYGLPDNSPTKTSGKCNPA.

The 60-residue stretch at 2-61 (KDGYPVDSGNCKYECLKDDYCNDLCLERKADKGYCYWGKVSCYCYGLPDNSPTKTSGKCN) folds into the LCN-type CS-alpha/beta domain. 4 cysteine pairs are disulfide-bonded: Cys-12–Cys-60, Cys-16–Cys-36, Cys-22–Cys-43, and Cys-26–Cys-45.

Belongs to the long (4 C-C) scorpion toxin superfamily. Sodium channel inhibitor family. Alpha subfamily. Expressed by the venom gland.

It localises to the secreted. In terms of biological role, alpha toxins bind voltage-independently at site-3 of sodium channels (Nav) and inhibit the inactivation of the activated channels, thereby blocking neuronal transmission. The polypeptide is Alpha-toxin CsE5 (Centruroides sculpturatus (Arizona bark scorpion)).